Consider the following 113-residue polypeptide: Nascent polypeptide-associated complex protein (113 aa).

Positions 5-73 (GMNPAKMKQM…AKEVPKSLEI (69 aa)) constitute an NAC-A/B domain.

It belongs to the NAC-alpha family. Homodimer. Interacts with the ribosome. Binds ribosomal RNA.

In terms of biological role, contacts the emerging nascent chain on the ribosome. The polypeptide is Nascent polypeptide-associated complex protein (Methanosarcina acetivorans (strain ATCC 35395 / DSM 2834 / JCM 12185 / C2A)).